The chain runs to 183 residues: Small ribosomal subunit protein cS23y (183 aa).

Belongs to the chloroplast-specific ribosomal protein cS23 family. In terms of assembly, part of the 30S ribosomal subunit.

The protein localises to the plastid. Its subcellular location is the chloroplast. In terms of biological role, component of the chloroplast ribosome (chloro-ribosome), a dedicated translation machinery responsible for the synthesis of chloroplast genome-encoded proteins, including proteins of the transcription and translation machinery and components of the photosynthetic apparatus. The chain is Small ribosomal subunit protein cS23y from Arabidopsis thaliana (Mouse-ear cress).